A 449-amino-acid chain; its full sequence is Methionine aminopeptidase 2-2 (449 aa).

The tract at residues 1–91 is disordered; sequence MAAQAAPELA…PRIPLTTLFP (91 aa). Over residues 15-28 the composition is skewed to polar residues; the sequence is NKNTGSAEASTVPA. The span at 34–50 shows a compositional bias: acidic residues; that stretch reads DDAENEGDSDDDRDDEQ. Positions 61–75 are enriched in basic residues; sequence KKKKKKRPKKKKKTA. His199 serves as a coordination point for substrate. A divalent metal cation contacts are provided by Asp219, Asp230, and His299. His307 contacts substrate. Residues Glu335 and Glu430 each coordinate a divalent metal cation.

This sequence belongs to the peptidase M24A family. Methionine aminopeptidase eukaryotic type 2 subfamily. It depends on Co(2+) as a cofactor. The cofactor is Zn(2+). Requires Mn(2+) as cofactor. Fe(2+) serves as cofactor.

It is found in the cytoplasm. It carries out the reaction Release of N-terminal amino acids, preferentially methionine, from peptides and arylamides.. Functionally, cotranslationally removes the N-terminal methionine from nascent proteins. The N-terminal methionine is often cleaved when the second residue in the primary sequence is small and uncharged (Met-Ala-, Cys, Gly, Pro, Ser, Thr, or Val). The polypeptide is Methionine aminopeptidase 2-2 (Arthroderma gypseum (strain ATCC MYA-4604 / CBS 118893) (Microsporum gypseum)).